We begin with the raw amino-acid sequence, 288 residues long: MQLIVVSGRSGSGKTVALRVLEDLGYYCVDNLPVNLLPQLIVSVESQYDKLAVSIDVRNLPASPDKLETLLAQVRNEGRVEFSSFFFDAENSTLLKRYGESRRLHPLSRNQLSLDEAIREETHLLAPLSSTADLRIDTTNLSIHDLSELIKTRVLGKKENELVLVFESFGFKYGIPKDADFVFDARFLPNPHWIPELKPFTGKDEPVARYLSSQPDVMQFILQIENMLATWLPHLERNNRSYVTVGIGCTGGQHRSVFIAEQLAGAFRLLGKNVQIRHRTLDKSAPQF.

8-15 is a binding site for ATP; it reads GRSGSGKT. 56–59 contacts GTP; sequence DVRN.

The protein belongs to the RapZ-like family.

Functionally, displays ATPase and GTPase activities. This chain is Nucleotide-binding protein AHA_3920, found in Aeromonas hydrophila subsp. hydrophila (strain ATCC 7966 / DSM 30187 / BCRC 13018 / CCUG 14551 / JCM 1027 / KCTC 2358 / NCIMB 9240 / NCTC 8049).